Here is a 329-residue protein sequence, read N- to C-terminus: 4-hydroxythreonine-4-phosphate dehydrogenase (329 aa).

Positions 136 and 137 each coordinate substrate. The a divalent metal cation site is built by His-166, His-211, and His-266. Residues Lys-274, Asn-283, and Arg-292 each contribute to the substrate site.

The protein belongs to the PdxA family. Homodimer. Requires Zn(2+) as cofactor. Mg(2+) serves as cofactor. It depends on Co(2+) as a cofactor.

Its subcellular location is the cytoplasm. It catalyses the reaction 4-(phosphooxy)-L-threonine + NAD(+) = 3-amino-2-oxopropyl phosphate + CO2 + NADH. It participates in cofactor biosynthesis; pyridoxine 5'-phosphate biosynthesis; pyridoxine 5'-phosphate from D-erythrose 4-phosphate: step 4/5. In terms of biological role, catalyzes the NAD(P)-dependent oxidation of 4-(phosphooxy)-L-threonine (HTP) into 2-amino-3-oxo-4-(phosphooxy)butyric acid which spontaneously decarboxylates to form 3-amino-2-oxopropyl phosphate (AHAP). This is 4-hydroxythreonine-4-phosphate dehydrogenase from Salmonella typhimurium (strain LT2 / SGSC1412 / ATCC 700720).